Consider the following 466-residue polypeptide: Ribulose bisphosphate carboxylase/oxygenase activase, chloroplastic (466 aa).

The N-terminal 48 residues, 1–48 (MAAAFSSTVGAPASTPTNFLGKKLKKQVTSAVNYHGKSSNINRFKVMA), are a transit peptide targeting the chloroplast. 156–163 (GGKGQGKS) serves as a coordination point for ATP. Residues 429–454 (QGAQQAGNLPVPEGCTDPVAKNFDPT) are disordered.

The protein belongs to the RuBisCO activase family.

The protein localises to the plastid. It localises to the chloroplast stroma. Activation of RuBisCO (ribulose-1,5-bisphosphate carboxylase/oxygenase; EC 4.1.1.39) involves the ATP-dependent carboxylation of the epsilon-amino group of lysine leading to a carbamate structure. This Oryza sativa subsp. japonica (Rice) protein is Ribulose bisphosphate carboxylase/oxygenase activase, chloroplastic (RCA).